We begin with the raw amino-acid sequence, 143 residues long: WW domain-containing protein C660.05 (143 aa).

In terms of domain architecture, WW spans 9-44; that stretch reads GLPAGWVAQWDPTYQAYFYINETFEGAQPQWEPPIP. The tract at residues 115–143 is disordered; that stretch reads HHGPLHGPHGGFGGRGGGRMGGRGGRGRR.

This chain is WW domain-containing protein C660.05, found in Schizosaccharomyces pombe (strain 972 / ATCC 24843) (Fission yeast).